Here is a 580-residue protein sequence, read N- to C-terminus: Type 3 secretion system translocon protein SctE (580 aa).

IpgC chaperone binding domain regions lie at residues 15–45 (KILT…IADL) and 51–72 (INTT…APKS). The interval 61 to 70 (NILIPELKAP) is mediates interaction with human MAD2L2. A coiled-coil region spans residues 104-224 (AWKSQQQARQ…MQLEKEIDSF (121 aa)). The next 2 membrane-spanning stretches (helical) occupy residues 313 to 333 (ILGA…GGAS) and 399 to 419 (IGSI…VVLV).

The protein belongs to the SctE/SipB/YopB family. In terms of assembly, the core secretion machinery of the T3SS is composed of approximately 20 different proteins, including cytoplasmic components, a base, an export apparatus and a needle. This subunit is involved in the formation of a pore, called the translocon, in host membrane. Interacts with IpaC/SctB. Interacts with the needle tip protein IpaD/SctA. Interacts with the molecular chaperone IpgC, which prevents premature association with IpaC/SctB within the cytoplasm of Shigella cells and protects IpaB/SctE from proteolysis. Interacts with the host protein ICE in the cytoplasm of infected macrophages. Interacts with human MAD2L2 in the G2/M phase of the cell cycle.

It localises to the secreted. The protein resides in the host membrane. Its subcellular location is the host cell. It is found in the host nucleus. With respect to regulation, interaction with the membrane is affected by the pH. IpaB/SctE is more efficient in destabilizing the membrane at pH 5.0 than at neutral pH. Its function is as follows. Component of the type III secretion system (T3SS), also called injectisome, which is used to inject bacterial effector proteins into eukaryotic host cells. IpaB/SctE and IpaC/SctB are inserted into the host membrane where they form a pore and allow the translocation of effector proteins into the cytosol of target cells. Interaction with IpaD/SctA at needle tips leads to the formation of the MxiH/SctF-IpaD/SctA-IpaB/SctE ternary complex, which is essential for host cell sensing. Interaction of IpaB/SctE with host membrane lipids promotes recruitment of IpaC/SctB at the needle tip concomitant with translocon insertion into the host membrane and type III secretion induction. Required for efficient dissemination. Necessary for lysis of the two cellular membranes that surround bacteria in protrusions during cell-to-cell spread. Is sufficient to induce macrophage apoptosis through activation of the interleukin-1 beta converting enzyme (ICE) in infected macrophages. In epithelial cells, causes cell-cycle arrest by targeting host MAD2L2, an anaphase-promoting complex/cyclosome (APC) inhibitor. The polypeptide is Type 3 secretion system translocon protein SctE (Shigella flexneri).